The primary structure comprises 214 residues: C-type lectin domain family 4 member E (214 aa).

The Cytoplasmic portion of the chain corresponds to 1 to 22; it reads MNSTKSPASHHTERGCFKNSQV. Residues 23-45 form a helical; Signal-anchor for type II membrane protein membrane-spanning segment; it reads LSWTIAGASILFLSGCFITRCVV. The Extracellular segment spans residues 46-214; sequence TYRSSQISGQ…CEMPEISPLD (169 aa). Cys80 and Cys91 are oxidised to a cystine. One can recognise a C-type lectin domain in the interval 87–206; it reads YQSSCYFFST…CFYSMPWICE (120 aa). A glycan (N-linked (GlcNAc...) asparagine) is linked at Asn107. 2 disulfides stabilise this stretch: Cys108–Cys205 and Cys179–Cys197. The Ca(2+) site is built by Val117, Glu123, Glu169, Asn171, Asn193, Asp194, and Glu206. The Confers specificity for glucose/mannose-type carbohydrates motif lies at 169-171; the sequence is EPN.

Monomer and homodimer. Interacts with signaling adapter Fc receptor gamma chain/FCER1G to form a functional complex; the interaction is direct. Alternatively, acts as a bridge for interaction between CLEC4D and FCER1G. A heterodimer of CLEC4E and CLEC4D associates with FCER1G to form a functional complex. Interacts with SAP130 nuclear protein that is released from necrotic cells; the interaction is direct. Highly expressed in macrophages in response to stimulation with bacterial glycolipids and pro-inflammatory cytokines. Expressed in dendritic cells (at protein level) in response to stimulation with mycobacterial trehalose 6,6'-dimycolate (TDM).

The protein localises to the cell membrane. It is found in the cell projection. The protein resides in the phagocytic cup. Calcium-dependent lectin that acts as a pattern recognition receptor (PRR) of the innate immune system: recognizes damage-associated molecular patterns (DAMPs) of abnormal self and pathogen-associated molecular patterns (PAMPs) of bacteria and fungi. The PAMPs notably include mycobacterial trehalose 6,6'-dimycolate (TDM), a cell wall glycolipid with potent adjuvant immunomodulatory functions. Interacts with signaling adapter Fc receptor gamma chain/FCER1G to form a functional complex in myeloid cells. Binding of mycobacterial trehalose 6,6'-dimycolate (TDM) to this receptor complex leads to phosphorylation of the immunoreceptor tyrosine-based activation motif (ITAM) of FCER1G, triggering activation of SYK, CARD9 and NF-kappa-B, consequently driving maturation of antigen-presenting cells and shaping antigen-specific priming of T-cells toward effector T-helper 1 (Th1) and T-helper 17 (Th17) cell subtypes. Also recognizes alpha-mannose residues on pathogenic fungi of the genus Malassezia and mediates macrophage activation. Through recognition of DAMPs released upon nonhomeostatic cell death, enables immune sensing of damaged self and promotes inflammatory cell infiltration into the damaged tissue. In Mus musculus (Mouse), this protein is C-type lectin domain family 4 member E.